Here is a 341-residue protein sequence, read N- to C-terminus: MATIKDVAKRAGVSTTTVSHVINKTRFVAENTRAAVWAAIKELNYSPSAVARSLKVNHTKSIGLLATSSEAPYFAEVIEAVENSCYSKGYTLILCNSHNNLDKQKAYLAMLAQKRVDGLLVMCSEYPDHLLSLLEGYRNIPMVVMDWGKARGDFTDTIIDNAFHGGYIAGRYLIERGHRDIGIIPGPLERNTGGGRLQGFLKAMEEAKITVKEEWIVQGDFEPESGYKAMTQMLNQKQRPTAVFCGGDVMAMGAICAADELGLRVPADISIVGYDNIRNARYFTPALTTVHQPKERLGQMAFSMLLDRIVNKREDAQTIEVHPRLVERRSVADGPFIDYRR.

The HTH lacI-type domain maps to 2–56 (ATIKDVAKRAGVSTTTVSHVINKTRFVAENTRAAVWAAIKELNYSPSAVARSLKV). Residues 4–23 (IKDVAKRAGVSTTTVSHVIN) constitute a DNA-binding region (H-T-H motif). The DNA-binding element occupies 48–56 (SAVARSLKV). Hypoxanthine is bound by residues Tyr73, Arg190, Thr192, Phe221, and Asp275.

In terms of assembly, homodimer.

The protein operates within purine metabolism; purine nucleotide biosynthesis [regulation]. Is the main repressor of the genes involved in the de novo synthesis of purine nucleotides, regulating purB, purC, purEK, purF, purHD, purL, purMN and guaBA expression. PurR is allosterically activated to bind its cognate DNA by binding the purine corepressors, hypoxanthine or guanine, thereby effecting transcription repression. In Proteus mirabilis (strain HI4320), this protein is HTH-type transcriptional repressor PurR.